The following is a 1074-amino-acid chain: Calcium-transporting ATPase 8, plasma membrane-type (1074 aa).

The disordered stretch occupies residues 1-33; that stretch reads MTSLLKSSPGRRRGGDVESGKSEHADSDSDTFY. Residues 1–180 are Cytoplasmic-facing; it reads MTSLLKSSPG…NTYPRKKGKG (180 aa). A compositionally biased stretch (basic and acidic residues) spans 13 to 27; sequence RGGDVESGKSEHADS. The interaction with calmodulin stretch occupies residues 43–54; sequence RLQQWRKAALVL. A helical membrane pass occupies residues 181–201; sequence FLRFLWDACHDLTLIILMVAA. Residues 202–219 are Extracellular-facing; the sequence is VASLALGIKTEGIKEGWY. A helical transmembrane segment spans residues 220–240; that stretch reads DGGSIAFAVILVIVVTAVSDY. Topologically, residues 241–369 are cytoplasmic; the sequence is KQSLQFQNLN…GEETPLQVRL (129 aa). Residues 370–389 traverse the membrane as a helical segment; sequence NGVATFIGSIGLAVAAAVLV. Topologically, residues 390 to 426 are extracellular; that stretch reads ILLTRYFTGHTKDNNGGPQFVKGKTKVGHVIDDVVKV. Residues 427-444 traverse the membrane as a helical segment; that stretch reads LTVAVTIVVVAVPEGLPL. The Cytoplasmic segment spans residues 445–840; sequence AVTLTLAYSM…RWGRSVYANI (396 aa). Asp482 acts as the 4-aspartylphosphate intermediate in catalysis. Mg(2+) contacts are provided by Asp785 and Asp789. A helical membrane pass occupies residues 841-859; the sequence is QKFIQFQLTVNVAALVINV. Residues 860-870 are Extracellular-facing; the sequence is VAAISSGDVPL. A helical membrane pass occupies residues 871-891; it reads TAVQLLWVNLIMDTLGALALA. Over 892 to 911 the chain is Cytoplasmic; the sequence is TEPPTDHLMGRPPVGRKEPL. Residues 912 to 934 traverse the membrane as a helical segment; the sequence is ITNIMWRNLLIQAIYQVSVLLTL. The Extracellular portion of the chain corresponds to 935–949; the sequence is NFRGISILGLEHEVH. A helical membrane pass occupies residues 950–971; it reads EHATRVKNTIIFNAFVLCQAFN. Topologically, residues 972 to 989 are cytoplasmic; it reads EFNARKPDEKNIFKGVIK. The chain crosses the membrane as a helical span at residues 990–1011; it reads NRLFMGIIVITLVLQVIIVEFL. At 1012–1021 the chain is on the extracellular side; it reads GKFASTTKLN. A helical transmembrane segment spans residues 1022–1043; that stretch reads WKQWLICVGIGVISWPLALVGK. The Cytoplasmic segment spans residues 1044 to 1074; that stretch reads FIPVPAAPISNKLKVLKFWGKKKNSSGEGSL.

Belongs to the cation transport ATPase (P-type) (TC 3.A.3) family. Type IIB subfamily.

It is found in the cell membrane. The enzyme catalyses Ca(2+)(in) + ATP + H2O = Ca(2+)(out) + ADP + phosphate + H(+). With respect to regulation, activated by calmodulin. Its function is as follows. This magnesium-dependent enzyme catalyzes the hydrolysis of ATP coupled with the translocation of calcium from the cytosol out of the cell. In Arabidopsis thaliana (Mouse-ear cress), this protein is Calcium-transporting ATPase 8, plasma membrane-type (ACA8).